The following is a 124-amino-acid chain: MMKINNLPRLIRTFLPATLLMLPLVWQTPALAQSASCTQGSTCVSVGGNNDPMSKEQARQSQQQWDETNRLRNKMNNRVEKDFDKNDRAVDAKDNCERSDNLNAYWEPNTQRCLDRLSGRKINP.

The N-terminal stretch at 1–32 (MMKINNLPRLIRTFLPATLLMLPLVWQTPALA) is a signal peptide. A disordered region spans residues 47 to 68 (GGNNDPMSKEQARQSQQQWDET).

Belongs to the UPF0482 family.

This is UPF0482 protein YpsIP31758_1865 from Yersinia pseudotuberculosis serotype O:1b (strain IP 31758).